A 221-amino-acid polypeptide reads, in one-letter code: 7-cyano-7-deazaguanine synthase (221 aa).

10–20 (LSGGLDSTTCM) provides a ligand contact to ATP. 4 residues coordinate Zn(2+): Cys-188, Cys-196, Cys-199, and Cys-202.

The protein belongs to the QueC family. As to quaternary structure, homodimer. Zn(2+) is required as a cofactor.

It catalyses the reaction 7-carboxy-7-deazaguanine + NH4(+) + ATP = 7-cyano-7-deazaguanine + ADP + phosphate + H2O + H(+). The protein operates within purine metabolism; 7-cyano-7-deazaguanine biosynthesis. Its function is as follows. Catalyzes the ATP-dependent conversion of 7-carboxy-7-deazaguanine (CDG) to 7-cyano-7-deazaguanine (preQ(0)). The polypeptide is 7-cyano-7-deazaguanine synthase (Oceanobacillus iheyensis (strain DSM 14371 / CIP 107618 / JCM 11309 / KCTC 3954 / HTE831)).